A 235-amino-acid polypeptide reads, in one-letter code: Small ribosomal subunit protein eS4 (235 aa).

The S4 RNA-binding domain maps to 38–101; the sequence is IPLLVLVRDF…EKSYRILFDE (64 aa).

This sequence belongs to the eukaryotic ribosomal protein eS4 family.

The polypeptide is Small ribosomal subunit protein eS4 (rps4e) (Archaeoglobus fulgidus (strain ATCC 49558 / DSM 4304 / JCM 9628 / NBRC 100126 / VC-16)).